The primary structure comprises 396 residues: 1-deoxy-D-xylulose 5-phosphate reductoisomerase (396 aa).

NADPH is bound by residues Thr-10, Gly-11, Ser-12, Ile-13, and Asn-123. Lys-124 contributes to the 1-deoxy-D-xylulose 5-phosphate binding site. Residue Glu-125 coordinates NADPH. Asp-149 contacts Mn(2+). 1-deoxy-D-xylulose 5-phosphate contacts are provided by Ser-150, Glu-151, Ser-185, and His-208. Position 151 (Glu-151) interacts with Mn(2+). Residue Gly-214 coordinates NADPH. 4 residues coordinate 1-deoxy-D-xylulose 5-phosphate: Ser-221, Asn-226, Lys-227, and Glu-230. Glu-230 provides a ligand contact to Mn(2+).

This sequence belongs to the DXR family. Mg(2+) serves as cofactor. Mn(2+) is required as a cofactor.

It carries out the reaction 2-C-methyl-D-erythritol 4-phosphate + NADP(+) = 1-deoxy-D-xylulose 5-phosphate + NADPH + H(+). The protein operates within isoprenoid biosynthesis; isopentenyl diphosphate biosynthesis via DXP pathway; isopentenyl diphosphate from 1-deoxy-D-xylulose 5-phosphate: step 1/6. Its function is as follows. Catalyzes the NADPH-dependent rearrangement and reduction of 1-deoxy-D-xylulose-5-phosphate (DXP) to 2-C-methyl-D-erythritol 4-phosphate (MEP). The protein is 1-deoxy-D-xylulose 5-phosphate reductoisomerase of Shewanella sp. (strain ANA-3).